We begin with the raw amino-acid sequence, 276 residues long: Large ribosomal subunit protein uL2 (276 aa).

Disordered regions lie at residues 1–20 and 219–276; these read MGIK…TTND and TVRG…RRKK. A compositionally biased stretch (polar residues) spans 7–20; the sequence is NPTTNGRRNMTTND.

It belongs to the universal ribosomal protein uL2 family. Part of the 50S ribosomal subunit. Forms a bridge to the 30S subunit in the 70S ribosome.

In terms of biological role, one of the primary rRNA binding proteins. Required for association of the 30S and 50S subunits to form the 70S ribosome, for tRNA binding and peptide bond formation. It has been suggested to have peptidyltransferase activity; this is somewhat controversial. Makes several contacts with the 16S rRNA in the 70S ribosome. This is Large ribosomal subunit protein uL2 from Bacillus anthracis (strain A0248).